The following is a 144-amino-acid chain: Androgenic gland hormone (144 aa).

An N-terminal signal peptide occupies residues 1 to 21 (MKGLVILVSLMCLALYNRICA). 4 disulfide bridges follow: Cys33–Cys123, Cys42–Cys59, Cys44–Cys141, and Cys124–Cys132. A propeptide spans 68 to 113 (SAPEDELAFEDYEDQDYFHPRALSIPSEIEHDNEKESDAFSILSRG) (c peptide). A glycan (N-linked (GlcNAc...) (complex) asparagine) is linked at Asn133.

As to expression, androgenic gland.

It localises to the secreted. In terms of biological role, controls sex differentiation and the formation of male appendages, spermatogenesis, pigmentation, and male specific behavior. This Armadillidium vulgare (Pillbug) protein is Androgenic gland hormone.